Reading from the N-terminus, the 549-residue chain is Glucose-6-phosphate isomerase (549 aa).

The active-site Proton donor is the Glu355. Catalysis depends on residues His387 and Lys515.

It belongs to the GPI family.

Its subcellular location is the cytoplasm. It carries out the reaction alpha-D-glucose 6-phosphate = beta-D-fructose 6-phosphate. Its pathway is carbohydrate biosynthesis; gluconeogenesis. It functions in the pathway carbohydrate degradation; glycolysis; D-glyceraldehyde 3-phosphate and glycerone phosphate from D-glucose: step 2/4. Catalyzes the reversible isomerization of glucose-6-phosphate to fructose-6-phosphate. This chain is Glucose-6-phosphate isomerase, found in Haemophilus influenzae (strain ATCC 51907 / DSM 11121 / KW20 / Rd).